Reading from the N-terminus, the 587-residue chain is Aspartate--tRNA ligase (587 aa).

Glu174 lines the L-aspartate pocket. The interval 198–201 (QITK) is aspartate. Arg220 serves as a coordination point for L-aspartate. Residues 220–222 (RDE) and Gln229 each bind ATP. His443 contributes to the L-aspartate binding site. An ATP-binding site is contributed by Glu477. Arg484 is a binding site for L-aspartate. 529 to 532 (GLDR) provides a ligand contact to ATP.

It belongs to the class-II aminoacyl-tRNA synthetase family. Type 1 subfamily. As to quaternary structure, homodimer.

Its subcellular location is the cytoplasm. It carries out the reaction tRNA(Asp) + L-aspartate + ATP = L-aspartyl-tRNA(Asp) + AMP + diphosphate. In terms of biological role, catalyzes the attachment of L-aspartate to tRNA(Asp) in a two-step reaction: L-aspartate is first activated by ATP to form Asp-AMP and then transferred to the acceptor end of tRNA(Asp). This is Aspartate--tRNA ligase from Streptococcus pneumoniae (strain ATCC 700669 / Spain 23F-1).